The sequence spans 105 residues: Small ribosomal subunit protein uS10 (105 aa).

The protein belongs to the universal ribosomal protein uS10 family. Part of the 30S ribosomal subunit.

Functionally, involved in the binding of tRNA to the ribosomes. The protein is Small ribosomal subunit protein uS10 of Acaryochloris marina (strain MBIC 11017).